We begin with the raw amino-acid sequence, 490 residues long: ATP synthase subunit beta (490 aa).

173–180 (GGAGVGKT) provides a ligand contact to ATP.

The protein belongs to the ATPase alpha/beta chains family. In terms of assembly, F-type ATPases have 2 components, CF(1) - the catalytic core - and CF(0) - the membrane proton channel. CF(1) has five subunits: alpha(3), beta(3), gamma(1), delta(1), epsilon(1). CF(0) has three main subunits: a(1), b(2) and c(9-12). The alpha and beta chains form an alternating ring which encloses part of the gamma chain. CF(1) is attached to CF(0) by a central stalk formed by the gamma and epsilon chains, while a peripheral stalk is formed by the delta and b chains.

The protein localises to the cell membrane. The enzyme catalyses ATP + H2O + 4 H(+)(in) = ADP + phosphate + 5 H(+)(out). In terms of biological role, produces ATP from ADP in the presence of a proton gradient across the membrane. The catalytic sites are hosted primarily by the beta subunits. The protein is ATP synthase subunit beta of Bifidobacterium longum (strain DJO10A).